Here is a 239-residue protein sequence, read N- to C-terminus: Purine nucleoside phosphorylase DeoD-type 1 (239 aa).

H5 is a binding site for a purine D-ribonucleoside. Phosphate contacts are provided by residues G21, R25, R44, and 88 to 91; that span reads RVGS. A purine D-ribonucleoside contacts are provided by residues 180–182 and 204–205; these read EME and SD. D205 functions as the Proton donor in the catalytic mechanism.

It belongs to the PNP/UDP phosphorylase family. In terms of assembly, homohexamer; trimer of homodimers.

The enzyme catalyses a purine D-ribonucleoside + phosphate = a purine nucleobase + alpha-D-ribose 1-phosphate. The catalysed reaction is a purine 2'-deoxy-D-ribonucleoside + phosphate = a purine nucleobase + 2-deoxy-alpha-D-ribose 1-phosphate. Catalyzes the reversible phosphorolytic breakdown of the N-glycosidic bond in the beta-(deoxy)ribonucleoside molecules, with the formation of the corresponding free purine bases and pentose-1-phosphate. This chain is Purine nucleoside phosphorylase DeoD-type 1, found in Vibrio vulnificus (strain CMCP6).